A 362-amino-acid chain; its full sequence is Cobalt-precorrin-5B C(1)-methyltransferase (362 aa).

Belongs to the CbiD family.

It catalyses the reaction Co-precorrin-5B + S-adenosyl-L-methionine = Co-precorrin-6A + S-adenosyl-L-homocysteine. The protein operates within cofactor biosynthesis; adenosylcobalamin biosynthesis; cob(II)yrinate a,c-diamide from sirohydrochlorin (anaerobic route): step 6/10. Its function is as follows. Catalyzes the methylation of C-1 in cobalt-precorrin-5B to form cobalt-precorrin-6A. This Burkholderia cenocepacia (strain ATCC BAA-245 / DSM 16553 / LMG 16656 / NCTC 13227 / J2315 / CF5610) (Burkholderia cepacia (strain J2315)) protein is Cobalt-precorrin-5B C(1)-methyltransferase.